A 37-amino-acid polypeptide reads, in one-letter code: Large ribosomal subunit protein bL36 (37 aa).

The protein belongs to the bacterial ribosomal protein bL36 family.

The chain is Large ribosomal subunit protein bL36 from Maridesulfovibrio salexigens (strain ATCC 14822 / DSM 2638 / NCIMB 8403 / VKM B-1763) (Desulfovibrio salexigens).